The primary structure comprises 183 residues: Probable transcription termination protein NusA (183 aa).

Residues 32-98 enclose the KH domain; that stretch reads DERVAFIVKE…DDVWVKRVGK (67 aa). Residues 149–183 form a disordered region; that stretch reads RKRAKRPVVKDQQQEQTETKQETDVQQDVKETVKE. Residues 156–183 show a composition bias toward basic and acidic residues; it reads VVKDQQQEQTETKQETDVQQDVKETVKE.

The protein belongs to the NusA family.

It localises to the cytoplasm. Functionally, participates in transcription termination. The protein is Probable transcription termination protein NusA of Methanocaldococcus jannaschii (strain ATCC 43067 / DSM 2661 / JAL-1 / JCM 10045 / NBRC 100440) (Methanococcus jannaschii).